A 186-amino-acid polypeptide reads, in one-letter code: Nicotinamide-nucleotide adenylyltransferase (186 aa).

It belongs to the archaeal NMN adenylyltransferase family.

Its subcellular location is the cytoplasm. The enzyme catalyses beta-nicotinamide D-ribonucleotide + ATP + H(+) = diphosphate + NAD(+). It participates in cofactor biosynthesis; NAD(+) biosynthesis; NAD(+) from nicotinamide D-ribonucleotide: step 1/1. The sequence is that of Nicotinamide-nucleotide adenylyltransferase from Thermococcus sibiricus (strain DSM 12597 / MM 739).